The sequence spans 847 residues: A-kinase anchor protein 4 (847 aa).

A propeptide spanning residues 1–187 (MIAYCGTTKM…MAASKNTNNN (187 aa)) is cleaved from the precursor. Residues Ser-95, Ser-129, Ser-189, and Ser-203 each carry the phosphoserine modification. Over residues 182 to 204 (KNTNNNQSPSNPATKSPSNQRSV) the composition is skewed to polar residues. Residues 182 to 209 (KNTNNNQSPSNPATKSPSNQRSVATPDG) form a disordered region. Thr-206 is subject to Phosphothreonine. 3 positions are modified to phosphoserine: Ser-212, Ser-225, and Ser-270. The segment at 218–231 (YYVNRLSSLVIQMA) is interaction with Prkar1a and Prkar2a. Residue Tyr-300 is modified to Phosphotyrosine. 10 positions are modified to phosphoserine: Ser-301, Ser-304, Ser-340, Ser-430, Ser-441, Ser-443, Ser-462, Ser-491, Ser-496, and Ser-503. Residues 334–343 (YANQVASDMM) are PKA-RI subunit binding domain. Thr-505 is modified (phosphothreonine). Positions 511–536 (KQGTQGRVPNKVCPSKDEKREKISPS) are disordered. Positions 524 to 533 (PSKDEKREKI) are enriched in basic and acidic residues. Phosphoserine is present on residues Ser-536 and Ser-581. The segment at 583–613 (QYEKSGGGQSSKSLSMKHFESRGAPGPSTCA) is disordered. Residues Ser-626, Ser-631, Ser-648, Ser-650, Ser-674, Ser-677, Ser-700, and Ser-729 each carry the phosphoserine modification. The disordered stretch occupies residues 655-677 (CCDSRSKQAAPVAKRPEDQSQDS).

The protein belongs to the AKAP110 family. In terms of assembly, interacts with PRKAR1A and PRKAR2A. Interacts with ENO4. Interacts with QRICH2. Post-translationally, phosphorylated by STK33 during sperm flagella assembly. In terms of tissue distribution, expressed in flagella of epididymal sperm.

The protein localises to the cell projection. It localises to the cilium. It is found in the flagellum. Its function is as follows. Major structural component of sperm fibrous sheath. May play a role in sperm motility. The sequence is that of A-kinase anchor protein 4 from Rattus norvegicus (Rat).